The chain runs to 283 residues: Elongation factor Ts (283 aa).

The tract at residues 80-83 is involved in Mg(2+) ion dislocation from EF-Tu; sequence TDFV.

This sequence belongs to the EF-Ts family.

Its subcellular location is the cytoplasm. In terms of biological role, associates with the EF-Tu.GDP complex and induces the exchange of GDP to GTP. It remains bound to the aminoacyl-tRNA.EF-Tu.GTP complex up to the GTP hydrolysis stage on the ribosome. The chain is Elongation factor Ts from Erwinia tasmaniensis (strain DSM 17950 / CFBP 7177 / CIP 109463 / NCPPB 4357 / Et1/99).